We begin with the raw amino-acid sequence, 622 residues long: MALLQISEPGMAPAPHQRRLAVGIDLGTTNSLVAAVRNSIPEALPDDAGRVLLPSVVRYLDKGGRRIGHAAKEEAAIDPRNTIVSVKRFMGRGKAEVEGAANAPYEFVDAPGMVQIRTVDGVKSPVEVSAEILATLRQRAEDTLGDDLVGAVITVPAYFDDAQRQATKDAARLAGLNVLRLLNEPTAAAIAYGLDNGAEGLYAVYDLGGGTFDLSILKLTKGVFEVLAAGGDSALGGDDFDHLLFEHVLAQAGLEAAALAPEDVRLLLDRVRGAKEALSAAPQARVDVKLSTGEKLAQTITRDTFAALVEPLVQRTLGPTRKALRDAQVSAADIKGVVLVGGATRMPVIRDAVAKYFGQPPLVNLDPDQVVALGAAIQADLLAGNRSGGDDWLLLDVIPLSLGVETMGGLVEKIIPRNSTIPVARAQEFTTFKDGQTAMAIHVVQGERELVSDCRSLARFELRGIPPMTAGAARIRVTYQVDADGLLSVFAREQHSGVEASVVVKPSYGLGDDDIARMLEDSFKTAEVDMRARALREAQVEAQRLVEATEAALVADGDLLDASERATVDALVASLRALAPGDDADAIDTATKALAEGTDEFAARRMDKSIKRALAGRKLDEI.

Belongs to the heat shock protein 70 family.

In terms of biological role, chaperone involved in the maturation of iron-sulfur cluster-containing proteins. Has a low intrinsic ATPase activity which is markedly stimulated by HscB. In Burkholderia pseudomallei (strain K96243), this protein is Chaperone protein HscA homolog.